The chain runs to 260 residues: Probable carbohydrate esterase At4g34215 (260 aa).

A disordered region spans residues 1–22 (MEGGSITPGEDKPEIQSPIPPN). Active-site residues include serine 31, aspartate 235, and histidine 238.

Belongs to the carbohydrate esterase 6 family.

The chain is Probable carbohydrate esterase At4g34215 from Arabidopsis thaliana (Mouse-ear cress).